Here is a 141-residue protein sequence, read N- to C-terminus: Cystatin-SA (141 aa).

Residues 1–20 form the signal peptide; that stretch reads MAWPLCTLLLLLATQAVALA. Positions 76 to 80 match the Secondary area of contact motif; sequence QIVGG. 2 disulfides stabilise this stretch: C94–C104 and C118–C138.

As to expression, expressed in submandibular and sublingual saliva but not in parotid saliva (at protein level). Expressed in submandibular gland and parotid gland.

It localises to the secreted. Its function is as follows. Thiol protease inhibitor. This Homo sapiens (Human) protein is Cystatin-SA (CST2).